The primary structure comprises 259 residues: Dihydroorotate dehydrogenase B (NAD(+)), electron transfer subunit (259 aa).

The 101-residue stretch at 1-101 folds into the FAD-binding FR-type domain; sequence MKIEDCTVEE…MGPLGRGYDV (101 aa). Residues 52 to 55, 69 to 71, and 76 to 77 each bind FAD; these read RPIS, IYR, and GT. [2Fe-2S] cluster is bound by residues cysteine 223, cysteine 228, cysteine 231, and cysteine 245.

It belongs to the PyrK family. In terms of assembly, heterotetramer of 2 PyrK and 2 PyrD type B subunits. Requires [2Fe-2S] cluster as cofactor. FAD serves as cofactor.

Its pathway is pyrimidine metabolism; UMP biosynthesis via de novo pathway; orotate from (S)-dihydroorotate (NAD(+) route): step 1/1. In terms of biological role, responsible for channeling the electrons from the oxidation of dihydroorotate from the FMN redox center in the PyrD type B subunit to the ultimate electron acceptor NAD(+). The sequence is that of Dihydroorotate dehydrogenase B (NAD(+)), electron transfer subunit from Fusobacterium nucleatum subsp. nucleatum (strain ATCC 25586 / DSM 15643 / BCRC 10681 / CIP 101130 / JCM 8532 / KCTC 2640 / LMG 13131 / VPI 4355).